A 357-amino-acid chain; its full sequence is Elongation factor Ts (357 aa).

Positions 82-85 (TDFV) are involved in Mg(2+) ion dislocation from EF-Tu.

It belongs to the EF-Ts family.

It is found in the cytoplasm. Functionally, associates with the EF-Tu.GDP complex and induces the exchange of GDP to GTP. It remains bound to the aminoacyl-tRNA.EF-Tu.GTP complex up to the GTP hydrolysis stage on the ribosome. The polypeptide is Elongation factor Ts (Campylobacter jejuni subsp. jejuni serotype O:2 (strain ATCC 700819 / NCTC 11168)).